A 487-amino-acid chain; its full sequence is N-succinylglutamate 5-semialdehyde dehydrogenase (487 aa).

221-226 (GSSDTG) lines the NAD(+) pocket. Active-site residues include E244 and C278.

Belongs to the aldehyde dehydrogenase family. AstD subfamily.

The catalysed reaction is N-succinyl-L-glutamate 5-semialdehyde + NAD(+) + H2O = N-succinyl-L-glutamate + NADH + 2 H(+). It functions in the pathway amino-acid degradation; L-arginine degradation via AST pathway; L-glutamate and succinate from L-arginine: step 4/5. Catalyzes the NAD-dependent reduction of succinylglutamate semialdehyde into succinylglutamate. In Burkholderia vietnamiensis (strain G4 / LMG 22486) (Burkholderia cepacia (strain R1808)), this protein is N-succinylglutamate 5-semialdehyde dehydrogenase.